Reading from the N-terminus, the 238-residue chain is Orotidine 5'-phosphate decarboxylase (238 aa).

Substrate-binding positions include Asp-10, Lys-32, 59–68 (DLKLHDIPNT), Thr-122, Arg-184, Gln-193, Gly-213, and Arg-214. The active-site Proton donor is Lys-61.

The protein belongs to the OMP decarboxylase family. Type 1 subfamily. In terms of assembly, homodimer.

It carries out the reaction orotidine 5'-phosphate + H(+) = UMP + CO2. It functions in the pathway pyrimidine metabolism; UMP biosynthesis via de novo pathway; UMP from orotate: step 2/2. Catalyzes the decarboxylation of orotidine 5'-monophosphate (OMP) to uridine 5'-monophosphate (UMP). This Bacillus cereus (strain Q1) protein is Orotidine 5'-phosphate decarboxylase.